The sequence spans 305 residues: 4-hydroxy-tetrahydrodipicolinate synthase 1 (305 aa).

Threonine 53 contacts pyruvate. Tyrosine 141 serves as the catalytic Proton donor/acceptor. Residue lysine 169 is the Schiff-base intermediate with substrate of the active site. A pyruvate-binding site is contributed by valine 209.

It belongs to the DapA family. As to quaternary structure, homotetramer; dimer of dimers.

The protein localises to the cytoplasm. The catalysed reaction is L-aspartate 4-semialdehyde + pyruvate = (2S,4S)-4-hydroxy-2,3,4,5-tetrahydrodipicolinate + H2O + H(+). The protein operates within amino-acid biosynthesis; L-lysine biosynthesis via DAP pathway; (S)-tetrahydrodipicolinate from L-aspartate: step 3/4. Its function is as follows. Catalyzes the condensation of (S)-aspartate-beta-semialdehyde [(S)-ASA] and pyruvate to 4-hydroxy-tetrahydrodipicolinate (HTPA). This is 4-hydroxy-tetrahydrodipicolinate synthase 1 from Streptomyces coelicolor (strain ATCC BAA-471 / A3(2) / M145).